Consider the following 534-residue polypeptide: Probable bifunctional tRNA threonylcarbamoyladenosine biosynthesis protein (534 aa).

Residues 1-325 are kae1; it reads MLCLGIEGTA…YRTDEVDVPW (325 aa). The Fe cation site is built by His108, His112, and Tyr129. Residues 129-133, Asp161, Gly174, Glu178, and Asn258 each bind L-threonylcarbamoyladenylate; that span reads YVSGG. Asp286 contacts Fe cation. In terms of domain architecture, Protein kinase spans 335 to 534; it reads LPPDILAKGA…EIESRGRYTD (200 aa). Residues 340 to 348 and Lys361 each bind ATP; that span reads LAKGAEANI. Asp451 functions as the Proton acceptor; for kinase activity in the catalytic mechanism.

The protein in the N-terminal section; belongs to the KAE1 / TsaD family. It in the C-terminal section; belongs to the protein kinase superfamily. Tyr protein kinase family. BUD32 subfamily. In terms of assembly, component of the KEOPS complex that consists of Kae1, Bud32, Cgi121 and Pcc1; the whole complex dimerizes. Fe(2+) serves as cofactor.

Its subcellular location is the cytoplasm. It catalyses the reaction L-seryl-[protein] + ATP = O-phospho-L-seryl-[protein] + ADP + H(+). It carries out the reaction L-threonyl-[protein] + ATP = O-phospho-L-threonyl-[protein] + ADP + H(+). The catalysed reaction is L-threonylcarbamoyladenylate + adenosine(37) in tRNA = N(6)-L-threonylcarbamoyladenosine(37) in tRNA + AMP + H(+). In terms of biological role, required for the formation of a threonylcarbamoyl group on adenosine at position 37 (t(6)A37) in tRNAs that read codons beginning with adenine. Is a component of the KEOPS complex that is probably involved in the transfer of the threonylcarbamoyl moiety of threonylcarbamoyl-AMP (TC-AMP) to the N6 group of A37. The Kae1 domain likely plays a direct catalytic role in this reaction. The Bud32 domain probably displays kinase activity that regulates Kae1 function. This is Probable bifunctional tRNA threonylcarbamoyladenosine biosynthesis protein from Methanothermobacter thermautotrophicus (strain ATCC 29096 / DSM 1053 / JCM 10044 / NBRC 100330 / Delta H) (Methanobacterium thermoautotrophicum).